The primary structure comprises 328 residues: Beta-ketoacyl-[acyl-carrier-protein] synthase III (328 aa).

Catalysis depends on residues C122 and H255. The interval 256–260 is ACP-binding; the sequence is QANIR. Residue N285 is part of the active site.

Belongs to the thiolase-like superfamily. FabH family. Homodimer.

The protein resides in the cytoplasm. It carries out the reaction malonyl-[ACP] + acetyl-CoA + H(+) = 3-oxobutanoyl-[ACP] + CO2 + CoA. It participates in lipid metabolism; fatty acid biosynthesis. Functionally, catalyzes the condensation reaction of fatty acid synthesis by the addition to an acyl acceptor of two carbons from malonyl-ACP. Catalyzes the first condensation reaction which initiates fatty acid synthesis and may therefore play a role in governing the total rate of fatty acid production. Possesses both acetoacetyl-ACP synthase and acetyl transacylase activities. Its substrate specificity determines the biosynthesis of branched-chain and/or straight-chain of fatty acids. This Polynucleobacter necessarius subsp. necessarius (strain STIR1) protein is Beta-ketoacyl-[acyl-carrier-protein] synthase III.